The following is a 491-amino-acid chain: Iota-carrageenase (491 aa).

Positions 1–19 (MKLQFKPVYLASIAIMAIG) are cleaved as a signal peptide. C422 and C490 are disulfide-bonded.

This sequence belongs to the glycosyl hydrolase 82 family.

It localises to the secreted. The enzyme catalyses Endohydrolysis of 1,4-beta-D-linkages between D-galactose 4-sulfate and 3,6-anhydro-D-galactose-2-sulfate in iota-carrageenans.. Functionally, hydrolyzes iota-carrageenans, sulfated 1,3-alpha-1,4-beta galactans from red algal cell walls, with an inversion of anomeric configuration. Also active against hybrid iota-/nu-carrageenan, not active against kappa- or lambda-carrageenans. This is Iota-carrageenase from Zobellia galactanivorans (strain DSM 12802 / CCUG 47099 / CIP 106680 / NCIMB 13871 / Dsij).